The chain runs to 401 residues: MKHAYIVDAIRTPFGRYAGGLAAVRADDLGAIPIAALIERNPSVNWAQVDDVIYGCANQAGEDNRNVGRMSALLAGLPVEVPATTVNRLCGSSLDAIAMAARAIKAGEAHLIIAGGVESMSRAPYVMGKSEGAFGRTQKIEDTTMGWRFINPKLKAMYGVDTMPQTAENVAEQFGIQREDQDQFAYTSQQRTAAAQAKGYFAKEIVPVTIPQRKGEPVVIDTDEHPRASTTLEGLAKLKGVVKPEGSVTAGNASGINDGAAAVLIASDEAVAQYQLKARAKIIASTTVGIEPRIMGFAPAPAIKKLLKQANLTLDQMDVIELNEAFAAQALACTRDLGLADDDARVNPNGGAIALGHPLGASGARLVTTALNQLEQSGGKYALCSMCIGVGQGIALIIERV.

Cys90 (acyl-thioester intermediate) is an active-site residue. Catalysis depends on proton acceptor residues His357 and Cys387.

This sequence belongs to the thiolase-like superfamily. Thiolase family.

The enzyme catalyses succinyl-CoA + acetyl-CoA = 3-oxoadipyl-CoA + CoA. The protein operates within aromatic compound metabolism; beta-ketoadipate pathway; acetyl-CoA and succinyl-CoA from 3-oxoadipate: step 2/2. Catalyzes thiolytic cleavage of beta-ketoadipyl-CoA to succinyl-CoA and acetyl-CoA. The sequence is that of Beta-ketoadipyl-CoA thiolase (pcaF) from Acinetobacter baylyi (strain ATCC 33305 / BD413 / ADP1).